Consider the following 76-residue polypeptide: Large ribosomal subunit protein uL29 (76 aa).

It belongs to the universal ribosomal protein uL29 family.

The polypeptide is Large ribosomal subunit protein uL29 (Gloeothece citriformis (strain PCC 7424) (Cyanothece sp. (strain PCC 7424))).